The chain runs to 528 residues: GMP synthase [glutamine-hydrolyzing] (528 aa).

The region spanning 13-204 (SILILDFGSQ…VYGISSCVAD (192 aa)) is the Glutamine amidotransferase type-1 domain. C90 serves as the catalytic Nucleophile. Residues H178 and E180 contribute to the active site. Residues 205–403 (WTTETYIEET…LGLPDEIIKR (199 aa)) enclose the GMPS ATP-PPase domain. An ATP-binding site is contributed by 232 to 238 (SGGVDSS).

Homodimer.

It catalyses the reaction XMP + L-glutamine + ATP + H2O = GMP + L-glutamate + AMP + diphosphate + 2 H(+). The protein operates within purine metabolism; GMP biosynthesis; GMP from XMP (L-Gln route): step 1/1. Functionally, catalyzes the synthesis of GMP from XMP. This chain is GMP synthase [glutamine-hydrolyzing], found in Prochlorococcus marinus (strain MIT 9312).